The sequence spans 233 residues: Large ribosomal subunit protein uL1 (233 aa).

Belongs to the universal ribosomal protein uL1 family. In terms of assembly, part of the 50S ribosomal subunit.

Functionally, binds directly to 23S rRNA. The L1 stalk is quite mobile in the ribosome, and is involved in E site tRNA release. Its function is as follows. Protein L1 is also a translational repressor protein, it controls the translation of the L11 operon by binding to its mRNA. This Zymomonas mobilis subsp. mobilis (strain ATCC 31821 / ZM4 / CP4) protein is Large ribosomal subunit protein uL1.